The primary structure comprises 310 residues: MKLLKASLVALSLAASTFVYADNGLIAIITPSHDNPFFKAEADGAKQKAEELGYTTLVASHDDDANKQDQLISTAVSRKAKAIILDNAGSDVTVGALEKAKAAGVPAFLIDREINKTGVAVSQIVSNNYQGAQLSAEKFVELMGEKGQYVELLGRESDTNASVRSQGFHEIIDEYPEMKMVAQQTANWSQTEGFSRMESILQANPNIKGVISGNDTMALGAEAALKAAGRTDVIVVGFDGSDYVRDSILAGGNIKATALQPAWDQAQEAVVQADKYIRTGSTGKEEKQLMDCILIDSSNAKKLNKFSLSK.

Residues 1 to 21 (MKLLKASLVALSLAASTFVYA) form the signal peptide. D-apiofuranose contacts are provided by residues Asn-35, 111–112 (DR), 158–160 (DTN), Arg-164, Asn-214, Asp-239, and Gln-260.

It belongs to the bacterial solute-binding protein 2 family.

It is found in the periplasm. Functionally, part of an ABC transporter complex involved in D-apiose import. Binds D-apiose, D-ribose and D-ribulose. This is D-apiose import binding protein from Actinobacillus succinogenes (strain ATCC 55618 / DSM 22257 / CCUG 43843 / 130Z).